We begin with the raw amino-acid sequence, 558 residues long: Scarecrow-like protein 6 (558 aa).

Residues 19–90 are disordered; the sequence is FSSSFPQPPS…GGDATTDEQC (72 aa). Over residues 54-75 the composition is skewed to low complexity; that stretch reads SVLDSLISPTSSSTVSSSHGGN. The GRAS domain occupies 196-554; that stretch reads KRLNPGPVGI…TELVGVSAWR (359 aa). Residues 203-257 are leucine repeat I (LRI); that stretch reads VGITEQLVKAAEVIESDTCLAQGILARLNQQLSSPVGKPLERAAFYFKEALNNLL. The interval 276 to 340 is VHIID; that stretch reads YKSFSEISPV…DNAAPLSLKI (65 aa). The VHIID signature appears at 307-311; it reads LHIID. Residues 356–388 are leucine repeat II (LRII); that stretch reads FTQDNLKHFASEINISLDIQVLSLDLLGSISWP. Residues 396–479 are PFYRE; the sequence is VAVNISAASF…RFLIQPEIEK (84 aa). The SAW stretch occupies residues 482-554; that stretch reads LDRSRPIERP…TELVGVSAWR (73 aa).

Belongs to the GRAS family. In terms of assembly, interacts with Meloidogyne incognita 16D10. In terms of tissue distribution, expressed in seedlings, roots, leaves, flowers and siliques.

Its subcellular location is the nucleus. Probable transcription factor involved in plant development. In Arabidopsis thaliana (Mouse-ear cress), this protein is Scarecrow-like protein 6 (SCL6).